Reading from the N-terminus, the 529-residue chain is Lysophosphatidylcholine acyltransferase 2 (529 aa).

The Cytoplasmic portion of the chain corresponds to 1–50 (MPPPHRVFALPRQQSLLLPAVINPFVHDLSLSTADITKCFLLGIILVPLR). A helical; Signal-anchor for type II membrane protein membrane pass occupies residues 51–71 (AIFLLLVLLVMWPVSVIITFG). Residues 72 to 529 (QSLKGVVEPM…EDSASDKKDD (458 aa)) lie on the Lumenal side of the membrane. Positions 128–133 (HSSFFD) match the HXXXXD motif motif. The EGTC motif motif lies at 202–205 (EGTC). N207 carries an N-linked (GlcNAc...) asparagine glycan. EF-hand domains are found at residues 373 to 408 (PISP…LCRP), 410 to 445 (NNEE…ALGV), and 449 to 480 (DVHS…HPEY). Residues D386, N388, D390, T392, E397, D423, D425, D427, C429, E434, D458, D460, S462, H464, and E469 each contribute to the Ca(2+) site.

The protein belongs to the 1-acyl-sn-glycerol-3-phosphate acyltransferase family.

The protein localises to the endoplasmic reticulum membrane. The protein resides in the golgi apparatus membrane. It localises to the cell membrane. It is found in the lipid droplet. The catalysed reaction is a 1-acyl-sn-glycero-3-phosphocholine + an acyl-CoA = a 1,2-diacyl-sn-glycero-3-phosphocholine + CoA. It carries out the reaction a 1-O-alkyl-sn-glycero-3-phosphocholine + acetyl-CoA = a 1-O-alkyl-2-acetyl-sn-glycero-3-phosphocholine + CoA. The enzyme catalyses a 1-acyl-sn-glycero-3-phosphate + an acyl-CoA = a 1,2-diacyl-sn-glycero-3-phosphate + CoA. It catalyses the reaction a 1-O-(1Z-alkenyl)-sn-glycero-3-phosphocholine + an acyl-CoA = a 1-O-(1Z-alkenyl)-2-acyl-sn-glycero-3-phosphocholine + CoA. The catalysed reaction is 1-hexadecanoyl-sn-glycero-3-phosphate + (9Z)-octadecenoyl-CoA = 1-hexadecanoyl-2-(9Z-octadecenoyl)-sn-glycero-3-phosphate + CoA. It carries out the reaction 1-(9Z-octadecenoyl)-sn-glycero-3-phosphate + (9Z)-octadecenoyl-CoA = 1,2-di-(9Z-octadecenoyl)-sn-glycero-3-phosphate + CoA. The enzyme catalyses 1-(9Z-octadecenoyl)-sn-glycero-3-phosphate + hexadecanoyl-CoA = 1-(9Z)-octadecenoyl-2-hexadecanoyl-sn-glycero-3-phosphate + CoA. It catalyses the reaction 1-heptadecanoyl-sn-glycero-3-phosphate + (9Z)-octadecenoyl-CoA = 1-heptadecanoyl-2-(9Z)-octadecenoyl-sn-glycero-3-phosphate + CoA. The catalysed reaction is 1-octadecanoyl-sn-glycero-3-phosphate + (9Z)-octadecenoyl-CoA = 1-octadecanoyl-2-(9Z-octadecenoyl)-sn-glycero-3-phosphate + CoA. It carries out the reaction heptadecanoyl-CoA + 1-(9Z-octadecenoyl)-sn-glycero-3-phosphate = 1-(9Z)-octadecenoyl-2-heptadecanoyl-sn-glycero-3-phosphate + CoA. The enzyme catalyses 1-(9Z-octadecenoyl)-sn-glycero-3-phosphate + (9Z,12Z)-octadecadienoyl-CoA = 1-(9Z)-octadecenoyl-2-(9Z,12Z)-octadecadienoyl-sn-glycero-3-phosphate + CoA. It catalyses the reaction 1-(9Z-octadecenoyl)-sn-glycero-3-phosphate + tetradecanoyl-CoA = 1-(9Z)-octadecenoyl-2-tetradecanoyl-sn-glycero-3-phosphate + CoA. The catalysed reaction is pentadecanoyl-CoA + 1-(9Z-octadecenoyl)-sn-glycero-3-phosphate = 1-(9Z)-octadecenoyl-2-pentadecanoyl-sn-glycero-3-phosphate + CoA. It carries out the reaction nonadecanoyl-CoA + 1-(9Z-octadecenoyl)-sn-glycero-3-phosphate = 1-(9Z)-octadecenoyl-2-nonadecanoyl-sn-glycero-3-phosphate + CoA. The enzyme catalyses 1-hexadecanoyl-sn-glycero-3-phosphocholine + (9Z)-octadecenoyl-CoA = 1-hexadecanoyl-2-(9Z-octadecenoyl)-sn-glycero-3-phosphocholine + CoA. It catalyses the reaction 1-O-hexadecyl-sn-glycero-3-phosphocholine + acetyl-CoA = 1-O-hexadecyl-2-acetyl-sn-glycero-3-phosphocholine + CoA. The catalysed reaction is 1-O-octadecyl-sn-glycero-3-phosphocholine + acetyl-CoA = 1-O-octadecyl-2-acetyl-sn-glycero-3-phosphocholine + CoA. It carries out the reaction 1-hexadecanoyl-sn-glycero-3-phosphocholine + acetyl-CoA = 1-hexadecanoyl-2-acetyl-sn-glycero-3-phosphocholine + CoA. The enzyme catalyses 1-octadecanoyl-sn-glycero-3-phosphocholine + acetyl-CoA = 1-octadecanoyl-2-acetyl-sn-glycero-3-phosphocholine + CoA. It catalyses the reaction a 1-O-(1Z-alkenyl)-sn-glycero-3-phosphocholine + acetyl-CoA = 1-O-(1Z)-alkenyl-2-acetyl-sn-glycero-3-phosphocholine + CoA. The catalysed reaction is 1-O-octadecyl-sn-glycero-3-phosphocholine + (5Z,8Z,11Z,14Z)-eicosatetraenoyl-CoA = 1-O-octadecyl-2-(5Z,8Z,11Z,14Z)-eicosatetraenoyl-sn-glycero-3-phosphocholine + CoA. The protein operates within lipid metabolism; phospholipid metabolism. Functionally, exhibits both acyltransferase and acetyltransferase activities. Activity is calcium-dependent. Catalyzes the conversion of lysophosphatidylcholine (1-acyl-sn-glycero-3-phosphocholine or LPC) into phosphatidylcholine (1,2-diacyl-sn-glycero-3-phosphocholine or PC). Catalyzes the conversion 1-acyl-sn-glycerol-3-phosphate (lysophosphatidic acid or LPA) into 1,2-diacyl-sn-glycerol-3-phosphate (phosphatidic acid or PA) by incorporating an acyl moiety at the sn-2 position of the glycerol backbone. Involved in platelet-activating factor (PAF) biosynthesis by catalyzing the conversion of the PAF precursor, 1-O-alkyl-sn-glycero-3-phosphocholine (lyso-PAF) into 1-O-alkyl-2-acetyl-sn-glycero-3-phosphocholine (PAF). The polypeptide is Lysophosphatidylcholine acyltransferase 2 (lpcat2) (Danio rerio (Zebrafish)).